The following is a 369-amino-acid chain: Putative cyclin-F1-1 (369 aa).

The tract at residues 328 to 350 (AQHHLESKPAGAAGVGINSSGDD) is disordered.

The protein belongs to the cyclin family. Cyclin F subfamily.

The sequence is that of Putative cyclin-F1-1 (CYCF1-1) from Oryza sativa subsp. japonica (Rice).